We begin with the raw amino-acid sequence, 194 residues long: Protein GrpE (194 aa).

Residues 1–44 (MAEEKQNEELNEQEELNETEAETAEAEQTAAEADAPAEETQTEM) form a disordered region. Residues 9–25 (ELNEQEELNETEAETAE) are compositionally biased toward acidic residues.

This sequence belongs to the GrpE family. As to quaternary structure, homodimer.

It localises to the cytoplasm. In terms of biological role, participates actively in the response to hyperosmotic and heat shock by preventing the aggregation of stress-denatured proteins, in association with DnaK and GrpE. It is the nucleotide exchange factor for DnaK and may function as a thermosensor. Unfolded proteins bind initially to DnaJ; upon interaction with the DnaJ-bound protein, DnaK hydrolyzes its bound ATP, resulting in the formation of a stable complex. GrpE releases ADP from DnaK; ATP binding to DnaK triggers the release of the substrate protein, thus completing the reaction cycle. Several rounds of ATP-dependent interactions between DnaJ, DnaK and GrpE are required for fully efficient folding. The protein is Protein GrpE of Bacillus licheniformis (strain ATCC 14580 / DSM 13 / JCM 2505 / CCUG 7422 / NBRC 12200 / NCIMB 9375 / NCTC 10341 / NRRL NRS-1264 / Gibson 46).